The primary structure comprises 242 residues: tRNA pseudouridine synthase A (242 aa).

Aspartate 51 serves as the catalytic Nucleophile. Tyrosine 107 lines the substrate pocket.

Belongs to the tRNA pseudouridine synthase TruA family. In terms of assembly, homodimer.

It carries out the reaction uridine(38/39/40) in tRNA = pseudouridine(38/39/40) in tRNA. Functionally, formation of pseudouridine at positions 38, 39 and 40 in the anticodon stem and loop of transfer RNAs. The sequence is that of tRNA pseudouridine synthase A from Helicobacter pylori (strain Shi470).